Here is a 132-residue protein sequence, read N- to C-terminus: Interleukin-13 (132 aa).

The N-terminal stretch at 1-18 (MALLLTTVIALTCLGGFA) is a signal peptide. Residues Asn-38, Asn-49, Asn-57, and Asn-72 are each glycosylated (N-linked (GlcNAc...) asparagine). 2 cysteine pairs are disulfide-bonded: Cys-48/Cys-76 and Cys-64/Cys-90.

Belongs to the IL-4/IL-13 family. In terms of assembly, interacts with IL13RA2.

It is found in the secreted. Its function is as follows. Cytokine that plays important roles in allergic inflammation and immune response to parasite infection. Synergizes with IL2 in regulating interferon-gamma synthesis. Stimulates B-cell proliferation, and activation of eosinophils, basophils, and mast cells. Plays an important role in controlling IL33 activity by modulating the production of transmembrane and soluble forms of interleukin-1 receptor-like 1/IL1RL1. Displays the capacity to antagonize Th1-driven proinflammatory immune response and downregulates synthesis of many proinflammatory cytokines including IL1, IL6, IL10, IL12 and TNF-alpha through a mechanism that partially involves suppression of NF-kappa-B. Also functions on nonhematopoietic cells, including endothelial cells where it induces vascular cell adhesion protein 1/VCAM1, which is important in the recruitment of eosinophils. Exerts its biological effects through its receptors which comprises the IL4R chain and the IL13RA1 chain, to activate JAK1 and TYK2, leading to the activation of STAT6. Aside from IL13RA1, another receptor IL13RA2 acts as a high affinity decoy for IL13 and mediates internalization and depletion of extracellular IL13. The polypeptide is Interleukin-13 (IL13) (Macaca mulatta (Rhesus macaque)).